A 385-amino-acid chain; its full sequence is Glucose-fructose oxidoreductase domain-containing protein 2 (385 aa).

Positions M1–A25 are cleaved as a signal peptide.

Belongs to the Gfo/Idh/MocA family.

It localises to the secreted. It is found in the extracellular space. The protein resides in the extracellular matrix. In terms of biological role, promotes matrix assembly. This Bos taurus (Bovine) protein is Glucose-fructose oxidoreductase domain-containing protein 2 (GFOD2).